The following is a 196-amino-acid chain: Protein LURP-one-related 8 (196 aa).

Belongs to the LOR family.

Might be related to the phospholipid scramblase and tubby-like superfamily of membrane tethered transcription factors. In Arabidopsis thaliana (Mouse-ear cress), this protein is Protein LURP-one-related 8.